The chain runs to 141 residues: Large ribosomal subunit protein uL11 (141 aa).

The protein belongs to the universal ribosomal protein uL11 family. In terms of assembly, part of the ribosomal stalk of the 50S ribosomal subunit. Interacts with L10 and the large rRNA to form the base of the stalk. L10 forms an elongated spine to which L12 dimers bind in a sequential fashion forming a multimeric L10(L12)X complex. In terms of processing, one or more lysine residues are methylated.

In terms of biological role, forms part of the ribosomal stalk which helps the ribosome interact with GTP-bound translation factors. The sequence is that of Large ribosomal subunit protein uL11 from Clostridium botulinum (strain Kyoto / Type A2).